A 275-amino-acid chain; its full sequence is Light-independent protochlorophyllide reductase iron-sulfur ATP-binding protein (275 aa).

Residues 12–17 and Lys41 each bind ATP; that span reads GIGKST. Ser16 provides a ligand contact to Mg(2+). The [4Fe-4S] cluster site is built by Cys97 and Cys131. Position 182 to 183 (182 to 183) interacts with ATP; the sequence is NR.

Belongs to the NifH/BchL/ChlL family. As to quaternary structure, homodimer. Protochlorophyllide reductase is composed of three subunits; BchL, BchN and BchB. [4Fe-4S] cluster serves as cofactor.

The enzyme catalyses chlorophyllide a + oxidized 2[4Fe-4S]-[ferredoxin] + 2 ADP + 2 phosphate = protochlorophyllide a + reduced 2[4Fe-4S]-[ferredoxin] + 2 ATP + 2 H2O. It functions in the pathway porphyrin-containing compound metabolism; bacteriochlorophyll biosynthesis (light-independent). In terms of biological role, component of the dark-operative protochlorophyllide reductase (DPOR) that uses Mg-ATP and reduced ferredoxin to reduce ring D of protochlorophyllide (Pchlide) to form chlorophyllide a (Chlide). This reaction is light-independent. The L component serves as a unique electron donor to the NB-component of the complex, and binds Mg-ATP. The sequence is that of Light-independent protochlorophyllide reductase iron-sulfur ATP-binding protein from Chlorobium phaeobacteroides (strain BS1).